Consider the following 934-residue polypeptide: Replication factor C subunit 1 (934 aa).

The disordered stretch occupies residues 1 to 190 (MSNSDIRSFF…RSSKSKGLPR (190 aa)). Residue S27 is modified to Phosphoserine. Over residues 29–39 (KPKRSLKKKRI) the composition is skewed to basic residues. Residues 89-104 (GVSTTPDEYFEQQSTR) are compositionally biased toward polar residues. The span at 118–128 (TTSKDVVHPVK) shows a compositional bias: basic and acidic residues. Residues 165 to 186 (TSKSKSHTTTATTHTSRSSKSK) are compositionally biased toward low complexity. The 91-residue stretch at 236-326 (GNSDCLSGIS…PASGGTGAAA (91 aa)) folds into the BRCT domain. ATP contacts are provided by residues T362, C374, 416–423 (GPPGIGKT), and N519. Residues 876-895 (AEDEMLEEASDSEAANEEDI) show a composition bias toward acidic residues. The interval 876–934 (AEDEMLEEASDSEAANEEDIDLSKDKFISVPKKPKKRTKAKAEASSSSSTSRRSRKKTA) is disordered.

Belongs to the activator 1 large subunit family. As to quaternary structure, heteropentamer of subunits rfc1, rfc2, rfc3, rfc4 and rfc5 that forms a complex (RFC) with PCNA in the presence of ATP. Interacts with cdc24.

It is found in the nucleus. It localises to the nucleolus. In terms of biological role, the elongation of primed DNA templates by DNA polymerase delta and epsilon requires the action of the accessory proteins PCNA and activator 1. Subunit 1 is essential for cell cycle progression. It may associate with components of the DNA replication machinery and serve to enhance the efficiency of DNA replication. The polypeptide is Replication factor C subunit 1 (rfc1) (Schizosaccharomyces pombe (strain 972 / ATCC 24843) (Fission yeast)).